Here is a 1136-residue protein sequence, read N- to C-terminus: 3-O-alpha-D-galactosyl-alpha-L-arabinofuranosidase (1136 aa).

The first 36 residues, 1–36 (MGISRNRLVPGLVGLAASAAIVLPLGIGMPVSSATA), serve as a signal peptide directing secretion. Glu-194 serves as the catalytic Proton donor. Glu-321 serves as the catalytic Nucleophile. CBM6 domains follow at residues 521 to 656 (QAIE…LLLY) and 669 to 779 (VTYP…VTTA). The 59-residue stretch at 987 to 1045 (KASLKVGETLSLNASVTPDSVADKTVQWTSSDEQVATVDEHGVVKGVKAGTVTITATSV) folds into the BIG2 domain. Residues 1049 to 1104 (SRSGSVEVTVAEDSEQKPSGGDGDNNGEQTGKPDGNTGGQTSDSDAGADSGNNQKH) form a disordered region. Positions 1087 to 1103 (GQTSDSDAGADSGNNQK) are enriched in polar residues. The helical transmembrane segment at 1109–1129 (GAAVAAVAGVAVLLAGAGLLL) threads the bilayer.

This sequence belongs to the glycosyl hydrolase 39 family.

The protein localises to the cell membrane. It is found in the secreted. It localises to the cell wall. It carries out the reaction Hydrolysis of alpha-D-Galp-(1-&gt;3)-L-Araf disaccharides from non-reducing terminals in branches of type II arabinogalactan attached to proteins.. Functionally, hydrolase involved in the degradation of the gum arabic arabinogalactan protein (AGP). Catalyzes the release of 3-O-alpha-D-galactopyranosyl-L-arabinose (alpha-D-Galp-(1-&gt;3)-L-Ara) from gum arabic AGP. Can also release 3-O-beta-L-arabinopyranosyl-L-arabinose (beta-L-Arap-(1-&gt;3)-L-Ara) from gum arabic AGP and larch AGP, but the alpha-D-Galp-(1-&gt;3)-L-Ara release activity is 594-fold higher than the beta-L-Arap-(1-&gt;3)-L-Ara release activity. Exhibits no reactivity toward p-nitrophenyl (pNP)-alpha-Araf or any other tested pNP substrate. Plays a crucial role in gum arabic AGP assimilation in B.longum. The protein is 3-O-alpha-D-galactosyl-alpha-L-arabinofuranosidase of Bifidobacterium longum subsp. longum.